Reading from the N-terminus, the 239-residue chain is tRNA (guanine-N(7)-)-methyltransferase (239 aa).

S-adenosyl-L-methionine is bound by residues E69, E94, D121, and D144. Residue D144 is part of the active site. K148 lines the substrate pocket. The tract at residues 150–155 (RHNKRR) is interaction with RNA. Substrate is bound by residues D180 and 217-220 (TKFE).

Belongs to the class I-like SAM-binding methyltransferase superfamily. TrmB family. In terms of assembly, monomer.

It catalyses the reaction guanosine(46) in tRNA + S-adenosyl-L-methionine = N(7)-methylguanosine(46) in tRNA + S-adenosyl-L-homocysteine. Its pathway is tRNA modification; N(7)-methylguanine-tRNA biosynthesis. In terms of biological role, catalyzes the formation of N(7)-methylguanine at position 46 (m7G46) in tRNA. In Klebsiella pneumoniae subsp. pneumoniae (strain ATCC 700721 / MGH 78578), this protein is tRNA (guanine-N(7)-)-methyltransferase.